We begin with the raw amino-acid sequence, 988 residues long: Bifunctional glutamine synthetase adenylyltransferase/adenylyl-removing enzyme (988 aa).

The segment at 1-474 is adenylyl removase; the sequence is MSSSAIDADI…HYSKLFEGDP (474 aa). Residues 480–988 form an adenylyl transferase region; the sequence is LPIDYAGGAE…FNRLIGGNGE (509 aa).

The protein belongs to the GlnE family. Mg(2+) is required as a cofactor.

The catalysed reaction is [glutamine synthetase]-O(4)-(5'-adenylyl)-L-tyrosine + phosphate = [glutamine synthetase]-L-tyrosine + ADP. It carries out the reaction [glutamine synthetase]-L-tyrosine + ATP = [glutamine synthetase]-O(4)-(5'-adenylyl)-L-tyrosine + diphosphate. In terms of biological role, involved in the regulation of glutamine synthetase GlnA, a key enzyme in the process to assimilate ammonia. When cellular nitrogen levels are high, the C-terminal adenylyl transferase (AT) inactivates GlnA by covalent transfer of an adenylyl group from ATP to specific tyrosine residue of GlnA, thus reducing its activity. Conversely, when nitrogen levels are low, the N-terminal adenylyl removase (AR) activates GlnA by removing the adenylyl group by phosphorolysis, increasing its activity. The regulatory region of GlnE binds the signal transduction protein PII (GlnB) which indicates the nitrogen status of the cell. The sequence is that of Bifunctional glutamine synthetase adenylyltransferase/adenylyl-removing enzyme from Rhodopseudomonas palustris (strain HaA2).